Here is a 103-residue protein sequence, read N- to C-terminus: Large ribosomal subunit protein uL23 (103 aa).

The protein belongs to the universal ribosomal protein uL23 family. As to quaternary structure, part of the 50S ribosomal subunit. Contacts protein L29, and trigger factor when it is bound to the ribosome.

In terms of biological role, one of the early assembly proteins it binds 23S rRNA. One of the proteins that surrounds the polypeptide exit tunnel on the outside of the ribosome. Forms the main docking site for trigger factor binding to the ribosome. This Zymomonas mobilis subsp. mobilis (strain ATCC 31821 / ZM4 / CP4) protein is Large ribosomal subunit protein uL23.